Consider the following 154-residue polypeptide: Ecotin-like protein 2 (154 aa).

This sequence belongs to the protease inhibitor I11 (ecotin) family.

This chain is Ecotin-like protein 2, found in Trypanosoma brucei brucei (strain 927/4 GUTat10.1).